The chain runs to 477 residues: Bifunctional protein HldE (477 aa).

The interval 1–318 is ribokinase; sequence MQIQLPMFQN…RRAVQQEQGA (318 aa). 195–198 lines the ATP pocket; the sequence is NLSE. Asp-264 is an active-site residue. The segment at 344–477 is cytidylyltransferase; it reads FTNGCFDIIH…VEKIRKDQVK (134 aa).

In the N-terminal section; belongs to the carbohydrate kinase PfkB family. This sequence in the C-terminal section; belongs to the cytidylyltransferase family. Homodimer.

It catalyses the reaction D-glycero-beta-D-manno-heptose 7-phosphate + ATP = D-glycero-beta-D-manno-heptose 1,7-bisphosphate + ADP + H(+). It carries out the reaction D-glycero-beta-D-manno-heptose 1-phosphate + ATP + H(+) = ADP-D-glycero-beta-D-manno-heptose + diphosphate. It participates in nucleotide-sugar biosynthesis; ADP-L-glycero-beta-D-manno-heptose biosynthesis; ADP-L-glycero-beta-D-manno-heptose from D-glycero-beta-D-manno-heptose 7-phosphate: step 1/4. It functions in the pathway nucleotide-sugar biosynthesis; ADP-L-glycero-beta-D-manno-heptose biosynthesis; ADP-L-glycero-beta-D-manno-heptose from D-glycero-beta-D-manno-heptose 7-phosphate: step 3/4. Catalyzes the phosphorylation of D-glycero-D-manno-heptose 7-phosphate at the C-1 position to selectively form D-glycero-beta-D-manno-heptose-1,7-bisphosphate. In terms of biological role, catalyzes the ADP transfer from ATP to D-glycero-beta-D-manno-heptose 1-phosphate, yielding ADP-D-glycero-beta-D-manno-heptose. This is Bifunctional protein HldE from Hahella chejuensis (strain KCTC 2396).